A 341-amino-acid polypeptide reads, in one-letter code: Outer membrane protein U (341 aa).

Positions 1–21 (MNKTLIALAVSAAAVATGAYA) are cleaved as a signal peptide.

This sequence belongs to the Gram-negative porin family. Homotrimer.

It is found in the cell outer membrane. Functionally, forms pores that allow passive diffusion of small molecules across the outer membrane. The chain is Outer membrane protein U (ompU) from Vibrio cholerae serotype O1 (strain ATCC 39315 / El Tor Inaba N16961).